Reading from the N-terminus, the 245-residue chain is Type II restriction enzyme MjaIV (245 aa).

It catalyses the reaction Endonucleolytic cleavage of DNA to give specific double-stranded fragments with terminal 5'-phosphates.. Functionally, a P subtype restriction enzyme that recognizes the double-stranded sequence 5'-GTNNAC-3'; the cleavage site is unknown. This Methanocaldococcus jannaschii (strain ATCC 43067 / DSM 2661 / JAL-1 / JCM 10045 / NBRC 100440) (Methanococcus jannaschii) protein is Type II restriction enzyme MjaIV (mjaIVR).